The primary structure comprises 428 residues: Cytochrome c biogenesis protein CcsB (428 aa).

A run of 3 helical transmembrane segments spans residues 14–34 (LRFAISLIIFIAITSGIGTFI), 72–92 (SIWFLFTLILLCISLSACSFR), and 162–182 (IGPLVVHIGLIVLLLGSAYGS).

The protein belongs to the Ccs1/CcsB family. As to quaternary structure, may interact with CcsA.

The protein localises to the cellular thylakoid membrane. Required during biogenesis of c-type cytochromes (cytochrome c6 and cytochrome f) at the step of heme attachment. The sequence is that of Cytochrome c biogenesis protein CcsB from Prochlorococcus marinus (strain MIT 9312).